The chain runs to 436 residues: Histidinol dehydrogenase (436 aa).

3 residues coordinate NAD(+): Tyr-136, Gln-198, and Asn-221. 3 residues coordinate substrate: Ser-244, Gln-266, and His-269. Zn(2+)-binding residues include Gln-266 and His-269. Residues Glu-334 and His-335 each act as proton acceptor in the active site. Positions 335, 368, 422, and 427 each coordinate substrate. Asp-368 is a Zn(2+) binding site. Zn(2+) is bound at residue His-427.

The protein belongs to the histidinol dehydrogenase family. The cofactor is Zn(2+).

It catalyses the reaction L-histidinol + 2 NAD(+) + H2O = L-histidine + 2 NADH + 3 H(+). Its pathway is amino-acid biosynthesis; L-histidine biosynthesis; L-histidine from 5-phospho-alpha-D-ribose 1-diphosphate: step 9/9. Functionally, catalyzes the sequential NAD-dependent oxidations of L-histidinol to L-histidinaldehyde and then to L-histidine. The chain is Histidinol dehydrogenase from Dehalococcoides mccartyi (strain CBDB1).